The primary structure comprises 568 residues: Urease subunit alpha (568 aa).

The Urease domain maps to 131-568 (GGMDAHIHFI…LPLAQRYFLY (438 aa)). Positions 136, 138, and 219 each coordinate Ni(2+). Lys219 carries the N6-carboxylysine modification. Position 221 (His221) interacts with substrate. Residues His248 and His274 each coordinate Ni(2+). His322 functions as the Proton donor in the catalytic mechanism. Ni(2+) is bound at residue Asp362.

Belongs to the metallo-dependent hydrolases superfamily. Urease alpha subunit family. In terms of assembly, heterotrimer of UreA (gamma), UreB (beta) and UreC (alpha) subunits. Three heterotrimers associate to form the active enzyme. The cofactor is Ni cation. Post-translationally, carboxylation allows a single lysine to coordinate two nickel ions.

Its subcellular location is the cytoplasm. The enzyme catalyses urea + 2 H2O + H(+) = hydrogencarbonate + 2 NH4(+). The protein operates within nitrogen metabolism; urea degradation; CO(2) and NH(3) from urea (urease route): step 1/1. This is Urease subunit alpha from Cereibacter sphaeroides (strain ATCC 17023 / DSM 158 / JCM 6121 / CCUG 31486 / LMG 2827 / NBRC 12203 / NCIMB 8253 / ATH 2.4.1.) (Rhodobacter sphaeroides).